We begin with the raw amino-acid sequence, 695 residues long: Pre-mRNA-splicing factor CLF1 (695 aa).

HAT repeat units follow at residues D41–E73, H75–K107, G109–S141, A143–R174, E176–R207, T296–N328, L333–K365, N375–R412, D414–K445, R447–S479, Q521–T553, and N591–Q629.

It belongs to the crooked-neck family. In terms of assembly, associated with the spliceosome.

The protein resides in the nucleus. Functionally, involved in pre-mRNA splicing and cell cycle progression. Required for the spliceosome assembly and initiation of the DNA replication. The chain is Pre-mRNA-splicing factor CLF1 (CLF1) from Candida glabrata (strain ATCC 2001 / BCRC 20586 / JCM 3761 / NBRC 0622 / NRRL Y-65 / CBS 138) (Yeast).